Consider the following 381-residue polypeptide: Cytochrome P450 105C1 (381 aa).

Cys-330 is a binding site for heme.

It belongs to the cytochrome P450 family. Requires heme as cofactor.

The protein localises to the cytoplasm. The polypeptide is Cytochrome P450 105C1 (cyp105C1) (Streptomyces sp).